The primary structure comprises 355 residues: cGAMP-activated phospholipase (355 aa).

The PNPLA domain occupies 17-214; that stretch reads LSLNGGGARG…VANNPSFIGL (198 aa). A GXGXXG motif is present at residues 21-26; sequence GGGARG. The GXSXG signature appears at 60–64; it reads GTSIG. Ser-62 acts as the Nucleophile in catalysis. The active-site Proton acceptor is Asp-201. Residues 201 to 203 carry the DGA/G motif; sequence DGG.

Belongs to the patatin family.

The enzyme catalyses a 1,2-diacyl-sn-glycero-3-phosphocholine + H2O = a 2-acyl-sn-glycero-3-phosphocholine + a fatty acid + H(+). It catalyses the reaction 1,2-di-(9Z-octadecenoyl)-sn-glycero-3-phosphoethanolamine + 2 H2O = sn-glycero-3-phosphoethanolamine + 2 (9Z)-octadecenoate + 2 H(+). With respect to regulation, phospholipase activity is specifically activated upon 3',3'-cGAMP (cGAMP) binding. Is not activated by the other cyclic dinucleotides 3',3'-cUAMP, 3',3'-c-diAMP and 3',3'-c-diGMP. Therefore, is specifically activated by only the nucleotide synthesized from its adjacently encoded nucleotidyltransferase (DncV). The cGAMP-activation of lipase is inhibited by T4 phage protein Acb2 (Vs.4). Its function is as follows. Effector phospholipase of a CBASS antiviral system. CBASS (cyclic oligonucleotide-based antiphage signaling system) provides immunity against bacteriophages. The CD-NTase protein (DncV) synthesizes cyclic nucleotides in response to infection; these serve as specific second messenger signals. The signals activate a diverse range of effectors, leading to bacterial cell death and thus abortive phage infection. A type II-A(GA) CBASS system. In terms of biological role, phospholipase that is activated upon binding to the cyclic dinucleotide (CDN) second messenger 3',3'-cyclic GMP-AMP (3',3'-cGAMP). Then degrades phosphatidylethanolamine (PE) and phosphatidylglycerol (PG), the major phospholipids in the cell membrane of V.cholerae, releasing 16:1 and 18:1 free fatty acids. Upon expression in E.coli with cognate DncV, the cell inner membrane shrinks and separates from the cell wall. Functionally, protects E.coli against phage infection. When the CBASS operon (capV-dncV-cap2-cap3) is introduced in E.coli MG1655 there is about 100-fold protection against phages P1 and T2. When the operon is introduced in E.coli MG1655 there is a more than 10(3) decrease in the efficiency of T2 plaque formation. Protects 100-fold against phage T5, offers no protection against T7. When the operon is introduced in E.coli MG1655 it protects against phages T2, T4, T5 and T6. Another paper shows the operon confers protection against phages P1, T2, T5 and T6 but not T4 or lambda. This chain is cGAMP-activated phospholipase, found in Vibrio cholerae serotype O1 (strain ATCC 39315 / El Tor Inaba N16961).